The following is a 482-amino-acid chain: Class E basic helix-loop-helix protein 41 (482 aa).

A Glycyl lysine isopeptide (Lys-Gly) (interchain with G-Cter in SUMO2) cross-link involves residue Lys31. The region spanning 44–99 is the bHLH domain; sequence TYKLPHRLIEKKRRDRINECIAQLKDLLPEHLKLTTLGHLEKAVVLELTLKHLKAL. Residues 67 to 71 form a necessary for interaction with RXRA and repressor activity towards RXRA region; sequence LKDLL. Lys121 is covalently cross-linked (Glycyl lysine isopeptide (Lys-Gly) (interchain with G-Cter in SUMO2)). The region spanning 131–166 is the Orange domain; it reads FHSGFQTCAKEVLQYLSRFESWTPREPRCVQLINHL. Lys210 participates in a covalent cross-link: Glycyl lysine isopeptide (Lys-Gly) (interchain with G-Cter in SUMO2). Disordered regions lie at residues 228–298 and 438–482; these read AELA…GGAA and VAPL…KEAP. The segment covering 246–256 has biased composition (basic and acidic residues); the sequence is AEARPDREKGK. Lys266 is covalently cross-linked (Glycyl lysine isopeptide (Lys-Gly) (interchain with G-Cter in SUMO2)). Residues 285-297 are compositionally biased toward gly residues; sequence RGGGSGGGPGGGA.

In terms of assembly, homodimer. Heterodimer with BHLHE40/DEC1. Interacts with CIART and BMAL1. Interacts with RXRA. Interacts with NR0B2 and HNF1A. In terms of tissue distribution, highly expressed in skeletal muscle and brain, moderately expressed in pancreas and heart, weakly expressed in placenta, lung, liver and kidney.

Its subcellular location is the nucleus. Its function is as follows. Transcriptional repressor involved in the regulation of the circadian rhythm by negatively regulating the activity of the clock genes and clock-controlled genes. Acts as the negative limb of a novel autoregulatory feedback loop (DEC loop) which differs from the one formed by the PER and CRY transcriptional repressors (PER/CRY loop). Both these loops are interlocked as it represses the expression of PER1 and in turn is repressed by PER1/2 and CRY1/2. Represses the activity of the circadian transcriptional activator: CLOCK-BMAL1 heterodimer by competing for the binding to E-box elements (5'-CACGTG-3') found within the promoters of its target genes. Negatively regulates its own expression and the expression of DBP and BHLHE41/DEC2. Acts as a corepressor of RXR and the RXR-LXR heterodimers and represses the ligand-induced RXRA/B/G, NR1H3/LXRA, NR1H4 and VDR transactivation activity. Inhibits HNF1A-mediated transactivation of CYP1A2, CYP2E1 AND CYP3A11. This chain is Class E basic helix-loop-helix protein 41, found in Homo sapiens (Human).